The sequence spans 250 residues: tRNA (guanine-N(1)-)-methyltransferase (250 aa).

Residues Gly116 and 136-141 (IGDYVL) each bind S-adenosyl-L-methionine.

It belongs to the RNA methyltransferase TrmD family. In terms of assembly, homodimer.

It is found in the cytoplasm. The enzyme catalyses guanosine(37) in tRNA + S-adenosyl-L-methionine = N(1)-methylguanosine(37) in tRNA + S-adenosyl-L-homocysteine + H(+). Specifically methylates guanosine-37 in various tRNAs. The polypeptide is tRNA (guanine-N(1)-)-methyltransferase (Pseudomonas syringae pv. tomato (strain ATCC BAA-871 / DC3000)).